The primary structure comprises 381 residues: Chaperone protein DnaJ (381 aa).

Residues 4–69 (DYYEILGVAR…EKRARYDQFG (66 aa)) enclose the J domain. Residues 139-221 (GGEKELRVTR…CGGSGLVRKT (83 aa)) form a CR-type zinc finger. Zn(2+)-binding residues include C152, C155, C169, C172, C195, C198, C209, and C212. CXXCXGXG motif repeat units follow at residues 152–159 (CGHCHGNG), 169–176 (CPTCQGRG), 195–202 (CSTCRGEG), and 209–216 (CRECGGSG).

It belongs to the DnaJ family. Homodimer. Zn(2+) serves as cofactor.

It is found in the cytoplasm. Its function is as follows. Participates actively in the response to hyperosmotic and heat shock by preventing the aggregation of stress-denatured proteins and by disaggregating proteins, also in an autonomous, DnaK-independent fashion. Unfolded proteins bind initially to DnaJ; upon interaction with the DnaJ-bound protein, DnaK hydrolyzes its bound ATP, resulting in the formation of a stable complex. GrpE releases ADP from DnaK; ATP binding to DnaK triggers the release of the substrate protein, thus completing the reaction cycle. Several rounds of ATP-dependent interactions between DnaJ, DnaK and GrpE are required for fully efficient folding. Also involved, together with DnaK and GrpE, in the DNA replication of plasmids through activation of initiation proteins. The sequence is that of Chaperone protein DnaJ from Carboxydothermus hydrogenoformans (strain ATCC BAA-161 / DSM 6008 / Z-2901).